The following is a 197-amino-acid chain: dTTP/UTP pyrophosphatase (197 aa).

D70 serves as the catalytic Proton acceptor.

The protein belongs to the Maf family. YhdE subfamily. A divalent metal cation serves as cofactor.

The protein resides in the cytoplasm. The enzyme catalyses dTTP + H2O = dTMP + diphosphate + H(+). It catalyses the reaction UTP + H2O = UMP + diphosphate + H(+). Nucleoside triphosphate pyrophosphatase that hydrolyzes dTTP and UTP. May have a dual role in cell division arrest and in preventing the incorporation of modified nucleotides into cellular nucleic acids. This Salmonella choleraesuis (strain SC-B67) protein is dTTP/UTP pyrophosphatase (yceF2).